We begin with the raw amino-acid sequence, 264 residues long: Thymidylate synthase (264 aa).

Arginine 21 serves as a coordination point for dUMP. Residue histidine 51 participates in (6R)-5,10-methylene-5,6,7,8-tetrahydrofolate binding. 126 to 127 serves as a coordination point for dUMP; it reads RR. The active-site Nucleophile is cysteine 146. DUMP contacts are provided by residues 166-169, asparagine 177, and 207-209; these read RSAD and HIY. Position 169 (aspartate 169) interacts with (6R)-5,10-methylene-5,6,7,8-tetrahydrofolate. A (6R)-5,10-methylene-5,6,7,8-tetrahydrofolate-binding site is contributed by alanine 263.

It belongs to the thymidylate synthase family. Bacterial-type ThyA subfamily. In terms of assembly, homodimer.

It localises to the cytoplasm. It carries out the reaction dUMP + (6R)-5,10-methylene-5,6,7,8-tetrahydrofolate = 7,8-dihydrofolate + dTMP. It participates in pyrimidine metabolism; dTTP biosynthesis. Functionally, catalyzes the reductive methylation of 2'-deoxyuridine-5'-monophosphate (dUMP) to 2'-deoxythymidine-5'-monophosphate (dTMP) while utilizing 5,10-methylenetetrahydrofolate (mTHF) as the methyl donor and reductant in the reaction, yielding dihydrofolate (DHF) as a by-product. This enzymatic reaction provides an intracellular de novo source of dTMP, an essential precursor for DNA biosynthesis. In Bacteroides thetaiotaomicron (strain ATCC 29148 / DSM 2079 / JCM 5827 / CCUG 10774 / NCTC 10582 / VPI-5482 / E50), this protein is Thymidylate synthase.